The sequence spans 184 residues: Large ribosomal subunit protein uL18 (184 aa).

The protein belongs to the universal ribosomal protein uL18 family. Part of the 50S ribosomal subunit. Contacts the 5S and 23S rRNAs.

This is one of the proteins that bind and probably mediate the attachment of the 5S RNA into the large ribosomal subunit, where it forms part of the central protuberance. The chain is Large ribosomal subunit protein uL18 from Natronomonas pharaonis (strain ATCC 35678 / DSM 2160 / CIP 103997 / JCM 8858 / NBRC 14720 / NCIMB 2260 / Gabara) (Halobacterium pharaonis).